Consider the following 320-residue polypeptide: Delta-aminolevulinic acid dehydratase (320 aa).

The Zn(2+) site is built by Cys119, Cys121, and Cys129. The active-site Schiff-base intermediate with substrate is the Lys194. Arg204 and Arg216 together coordinate 5-aminolevulinate. Position 232 (Glu232) interacts with Mg(2+). Lys247 serves as the catalytic Schiff-base intermediate with substrate. Ser273 serves as a coordination point for 5-aminolevulinate.

It belongs to the ALAD family. In terms of assembly, homooctamer. Requires Zn(2+) as cofactor.

It catalyses the reaction 2 5-aminolevulinate = porphobilinogen + 2 H2O + H(+). It participates in porphyrin-containing compound metabolism; protoporphyrin-IX biosynthesis; coproporphyrinogen-III from 5-aminolevulinate: step 1/4. In terms of biological role, catalyzes an early step in the biosynthesis of tetrapyrroles. Binds two molecules of 5-aminolevulinate per subunit, each at a distinct site, and catalyzes their condensation to form porphobilinogen. The protein is Delta-aminolevulinic acid dehydratase (hemB) of Methanothermus sociabilis.